The primary structure comprises 278 residues: Sulfur carrier protein FdhD (278 aa).

Cysteine 117 acts as the Cysteine persulfide intermediate in catalysis.

This sequence belongs to the FdhD family.

The protein localises to the cytoplasm. Its function is as follows. Required for formate dehydrogenase (FDH) activity. Acts as a sulfur carrier protein that transfers sulfur from IscS to the molybdenum cofactor prior to its insertion into FDH. The chain is Sulfur carrier protein FdhD from Variovorax paradoxus (strain S110).